Here is a 304-residue protein sequence, read N- to C-terminus: DDRGK domain-containing protein 1 (304 aa).

Residues 1 to 2 (MD) lie on the Lumenal side of the membrane. Residues 3–23 (LIILVGIAIALLVVIISLYLL) form a helical membrane-spanning segment. Residues 24–304 (QKKNSTTEAK…LTPVSAEGSS (281 aa)) are Cytoplasmic-facing. The disordered stretch occupies residues 31–174 (EAKPAAAAPQ…AERLAKEERE (144 aa)). Residues 53–82 (RRAQIARNQRNRLRQNAPVAAAAPQAEAPA) are compositionally biased toward low complexity. Positions 105–174 (LDEKMGAKKR…AERLAKEERE (70 aa)) are enriched in basic and acidic residues.

It belongs to the DDRGK1 family. As to quaternary structure, interacts with Atg9; the interaction is transient.

The protein resides in the endoplasmic reticulum membrane. In terms of biological role, substrate adapter for ufmylation, the covalent attachment of the ubiquitin-like modifier UFM1 to substrate proteins. Required for ufmylation of Atg9; protects the nervous system during aging, possibly by stabilizing Atg9 and supporting its function. The sequence is that of DDRGK domain-containing protein 1 from Drosophila ananassae (Fruit fly).